The primary structure comprises 466 residues: Asparagine--tRNA ligase (466 aa).

The protein belongs to the class-II aminoacyl-tRNA synthetase family. As to quaternary structure, homodimer.

The protein localises to the cytoplasm. The enzyme catalyses tRNA(Asn) + L-asparagine + ATP = L-asparaginyl-tRNA(Asn) + AMP + diphosphate + H(+). The polypeptide is Asparagine--tRNA ligase (Photorhabdus laumondii subsp. laumondii (strain DSM 15139 / CIP 105565 / TT01) (Photorhabdus luminescens subsp. laumondii)).